Consider the following 502-residue polypeptide: MFS-type transporeter aprT (502 aa).

The interval 1–38 (MASPELASHHSDPSDGEGAPFLPGVDDESPESLNSDIP) is disordered. The next 11 membrane-spanning stretches (helical) occupy residues 45 to 65 (HGLI…GPMI), 114 to 136 (IGYR…GLLA), 150 to 170 (VGFV…NIFP), 175 to 195 (WFGA…ALFW), 214 to 234 (FGIA…FVMK), 239 to 259 (VPLM…NLLP), 302 to 322 (VAVI…AFLV), 336 to 356 (ATLL…FILP), 380 to 400 (VMLL…NTLI), 403 to 423 (LLLH…ITGL), and 464 to 484 (LWIG…ALVL). Asn495 is a glycosylation site (N-linked (GlcNAc...) asparagine).

The protein belongs to the major facilitator superfamily.

The protein resides in the cell membrane. In terms of biological role, MFS-rype transporer; part of the gene cluster that mediates the biosynthesis of the asperipin-2a, a bicyclic peptide that possesses two macrocyclic ether rings consisting of 14- and 17-membered paracyclophans. AprT is likely to be involved in the cellular export of asperipin-2a. This chain is MFS-type transporeter aprT, found in Aspergillus flavus (strain ATCC 200026 / FGSC A1120 / IAM 13836 / NRRL 3357 / JCM 12722 / SRRC 167).